We begin with the raw amino-acid sequence, 119 residues long: UPF0342 protein GK0640 (119 aa).

The protein belongs to the UPF0342 family.

The chain is UPF0342 protein GK0640 from Geobacillus kaustophilus (strain HTA426).